A 59-amino-acid polypeptide reads, in one-letter code: Large ribosomal subunit protein bL32 (59 aa).

Residues 1–20 (MAVQKNKPTRSKRGMRRSHD) form a disordered region. Over residues 7–19 (KPTRSKRGMRRSH) the composition is skewed to basic residues.

The protein belongs to the bacterial ribosomal protein bL32 family.

This Wigglesworthia glossinidia brevipalpis protein is Large ribosomal subunit protein bL32.